We begin with the raw amino-acid sequence, 326 residues long: Transcription factor bHLH143 (326 aa).

Residues 175 to 189 (SDDDDNDDWESDDEV) are compositionally biased toward acidic residues. Disordered regions lie at residues 175-194 (SDDDDNDDWESDDEVMSTGH) and 234-275 (RDSS…EQSR). Over residues 255–271 (PESNISSKQETGSGLSD) the composition is skewed to polar residues. Residues 263–312 (QETGSGLSDEQSRKDKIHTALRILESVVPGAKGKEALLLLDEAIDYLKLL) form the bHLH domain.

As to quaternary structure, homodimer.

The protein resides in the nucleus. The sequence is that of Transcription factor bHLH143 (BHLH143) from Arabidopsis thaliana (Mouse-ear cress).